A 311-amino-acid polypeptide reads, in one-letter code: 3-dehydro-scyllo-inosose hydrolase (311 aa).

Zn(2+) contacts are provided by Glu35, His37, Asp46, His117, and Glu173.

Belongs to the creatininase superfamily. In terms of assembly, homotrimer. Zn(2+) is required as a cofactor.

It carries out the reaction 3-dehydro-scyllo-inosose + H2O = 5-dehydro-L-gluconate + H(+). The protein operates within polyol metabolism; myo-inositol metabolism. Its function is as follows. Catalyzes the ring-opening hydrolysis of 3-dehydro-scyllo-inosose (diketo-inositol) to 5-dehydro-L-gluconate, and thus probably functions in a myo-inositol degradation pathway together with IolG, IolM and IolO. The sequence is that of 3-dehydro-scyllo-inosose hydrolase from Thermotoga maritima (strain ATCC 43589 / DSM 3109 / JCM 10099 / NBRC 100826 / MSB8).